We begin with the raw amino-acid sequence, 165 residues long: Crossover junction endodeoxyribonuclease RuvC (165 aa).

Active-site residues include Asp-7, Glu-67, and Asp-140. Asp-7, Glu-67, and Asp-140 together coordinate Mg(2+).

It belongs to the RuvC family. In terms of assembly, homodimer which binds Holliday junction (HJ) DNA. The HJ becomes 2-fold symmetrical on binding to RuvC with unstacked arms; it has a different conformation from HJ DNA in complex with RuvA. In the full resolvosome a probable DNA-RuvA(4)-RuvB(12)-RuvC(2) complex forms which resolves the HJ. The cofactor is Mg(2+).

It is found in the cytoplasm. It catalyses the reaction Endonucleolytic cleavage at a junction such as a reciprocal single-stranded crossover between two homologous DNA duplexes (Holliday junction).. In terms of biological role, the RuvA-RuvB-RuvC complex processes Holliday junction (HJ) DNA during genetic recombination and DNA repair. Endonuclease that resolves HJ intermediates. Cleaves cruciform DNA by making single-stranded nicks across the HJ at symmetrical positions within the homologous arms, yielding a 5'-phosphate and a 3'-hydroxyl group; requires a central core of homology in the junction. The consensus cleavage sequence is 5'-(A/T)TT(C/G)-3'. Cleavage occurs on the 3'-side of the TT dinucleotide at the point of strand exchange. HJ branch migration catalyzed by RuvA-RuvB allows RuvC to scan DNA until it finds its consensus sequence, where it cleaves and resolves the cruciform DNA. This chain is Crossover junction endodeoxyribonuclease RuvC, found in Desulfitobacterium hafniense (strain DSM 10664 / DCB-2).